The primary structure comprises 125 residues: Glycine cleavage system H protein (125 aa).

The 82-residue stretch at 23 to 104 (VVYIGITDYA…PYENWILKVK (82 aa)) folds into the Lipoyl-binding domain. Residue Lys-64 is modified to N6-lipoyllysine.

It belongs to the GcvH family. As to quaternary structure, the glycine cleavage system is composed of four proteins: P, T, L and H. It depends on (R)-lipoate as a cofactor.

In terms of biological role, the glycine cleavage system catalyzes the degradation of glycine. The H protein shuttles the methylamine group of glycine from the P protein to the T protein. The protein is Glycine cleavage system H protein of Clostridioides difficile (strain 630) (Peptoclostridium difficile).